Reading from the N-terminus, the 379-residue chain is Bifunctional enzyme IspD/IspF (379 aa).

The 2-C-methyl-D-erythritol 4-phosphate cytidylyltransferase stretch occupies residues 1 to 223; the sequence is MTVAVIIVAA…RERKGLTMDV (223 aa). The segment at 224 to 379 is 2-C-methyl-D-erythritol 2,4-cyclodiphosphate synthase; the sequence is RLGNGYDVHA…SIATVTLIGA (156 aa). A divalent metal cation-binding residues include aspartate 230 and histidine 232. 4-CDP-2-C-methyl-D-erythritol 2-phosphate contacts are provided by residues 230 to 232 and 256 to 257; these read DVH and HS. Histidine 264 serves as a coordination point for a divalent metal cation. 4-CDP-2-C-methyl-D-erythritol 2-phosphate-binding positions include 278–280, 354–357, phenylalanine 361, and arginine 364; these read DIG and TTSE.

The protein in the N-terminal section; belongs to the IspD/TarI cytidylyltransferase family. IspD subfamily. In the C-terminal section; belongs to the IspF family. It depends on a divalent metal cation as a cofactor.

It carries out the reaction 2-C-methyl-D-erythritol 4-phosphate + CTP + H(+) = 4-CDP-2-C-methyl-D-erythritol + diphosphate. The catalysed reaction is 4-CDP-2-C-methyl-D-erythritol 2-phosphate = 2-C-methyl-D-erythritol 2,4-cyclic diphosphate + CMP. The protein operates within isoprenoid biosynthesis; isopentenyl diphosphate biosynthesis via DXP pathway; isopentenyl diphosphate from 1-deoxy-D-xylulose 5-phosphate: step 2/6. It functions in the pathway isoprenoid biosynthesis; isopentenyl diphosphate biosynthesis via DXP pathway; isopentenyl diphosphate from 1-deoxy-D-xylulose 5-phosphate: step 4/6. Its function is as follows. Bifunctional enzyme that catalyzes the formation of 4-diphosphocytidyl-2-C-methyl-D-erythritol from CTP and 2-C-methyl-D-erythritol 4-phosphate (MEP) (IspD), and catalyzes the conversion of 4-diphosphocytidyl-2-C-methyl-D-erythritol 2-phosphate (CDP-ME2P) to 2-C-methyl-D-erythritol 2,4-cyclodiphosphate (ME-CPP) with a corresponding release of cytidine 5-monophosphate (CMP) (IspF). This chain is Bifunctional enzyme IspD/IspF, found in Rhodobacter capsulatus (strain ATCC BAA-309 / NBRC 16581 / SB1003).